The primary structure comprises 332 residues: Holliday junction branch migration complex subunit RuvB (332 aa).

The segment at 1-181 (MSRILDNEIM…FGITGHMEYY (181 aa)) is large ATPase domain (RuvB-L). Residues L20, R21, G62, K65, T66, T67, 128-130 (EDF), R171, Y181, and R218 contribute to the ATP site. A Mg(2+)-binding site is contributed by T66. Residues 182–252 (AHADLTEIVE…ITDKALTMLD (71 aa)) are small ATPAse domain (RuvB-S). Residues 255–332 (HEGLDYVDQK…EHLGYEYNEK (78 aa)) form a head domain (RuvB-H) region. DNA is bound by residues R291, R310, R312, and R315.

It belongs to the RuvB family. As to quaternary structure, homohexamer. Forms an RuvA(8)-RuvB(12)-Holliday junction (HJ) complex. HJ DNA is sandwiched between 2 RuvA tetramers; dsDNA enters through RuvA and exits via RuvB. An RuvB hexamer assembles on each DNA strand where it exits the tetramer. Each RuvB hexamer is contacted by two RuvA subunits (via domain III) on 2 adjacent RuvB subunits; this complex drives branch migration. In the full resolvosome a probable DNA-RuvA(4)-RuvB(12)-RuvC(2) complex forms which resolves the HJ.

Its subcellular location is the cytoplasm. It carries out the reaction ATP + H2O = ADP + phosphate + H(+). Functionally, the RuvA-RuvB-RuvC complex processes Holliday junction (HJ) DNA during genetic recombination and DNA repair, while the RuvA-RuvB complex plays an important role in the rescue of blocked DNA replication forks via replication fork reversal (RFR). RuvA specifically binds to HJ cruciform DNA, conferring on it an open structure. The RuvB hexamer acts as an ATP-dependent pump, pulling dsDNA into and through the RuvAB complex. RuvB forms 2 homohexamers on either side of HJ DNA bound by 1 or 2 RuvA tetramers; 4 subunits per hexamer contact DNA at a time. Coordinated motions by a converter formed by DNA-disengaged RuvB subunits stimulates ATP hydrolysis and nucleotide exchange. Immobilization of the converter enables RuvB to convert the ATP-contained energy into a lever motion, pulling 2 nucleotides of DNA out of the RuvA tetramer per ATP hydrolyzed, thus driving DNA branch migration. The RuvB motors rotate together with the DNA substrate, which together with the progressing nucleotide cycle form the mechanistic basis for DNA recombination by continuous HJ branch migration. Branch migration allows RuvC to scan DNA until it finds its consensus sequence, where it cleaves and resolves cruciform DNA. This is Holliday junction branch migration complex subunit RuvB from Streptococcus pneumoniae (strain CGSP14).